The primary structure comprises 450 residues: Phosphoglucosamine mutase (450 aa).

Ser-102 (phosphoserine intermediate) is an active-site residue. Mg(2+) contacts are provided by Ser-102, Asp-244, Asp-246, and Asp-248. The residue at position 102 (Ser-102) is a Phosphoserine.

It belongs to the phosphohexose mutase family. It depends on Mg(2+) as a cofactor. Post-translationally, activated by phosphorylation.

The catalysed reaction is alpha-D-glucosamine 1-phosphate = D-glucosamine 6-phosphate. In terms of biological role, catalyzes the conversion of glucosamine-6-phosphate to glucosamine-1-phosphate. This chain is Phosphoglucosamine mutase, found in Bartonella bacilliformis (strain ATCC 35685 / KC583 / Herrer 020/F12,63).